Consider the following 440-residue polypeptide: ATP-dependent protease ATPase subunit HslU (440 aa).

ATP is bound by residues isoleucine 18, 60-65, aspartate 253, glutamate 318, and arginine 390; that span reads GVGKTE.

The protein belongs to the ClpX chaperone family. HslU subfamily. As to quaternary structure, a double ring-shaped homohexamer of HslV is capped on each side by a ring-shaped HslU homohexamer. The assembly of the HslU/HslV complex is dependent on binding of ATP.

It is found in the cytoplasm. Its function is as follows. ATPase subunit of a proteasome-like degradation complex; this subunit has chaperone activity. The binding of ATP and its subsequent hydrolysis by HslU are essential for unfolding of protein substrates subsequently hydrolyzed by HslV. HslU recognizes the N-terminal part of its protein substrates and unfolds these before they are guided to HslV for hydrolysis. The polypeptide is ATP-dependent protease ATPase subunit HslU (Shewanella oneidensis (strain ATCC 700550 / JCM 31522 / CIP 106686 / LMG 19005 / NCIMB 14063 / MR-1)).